A 550-amino-acid polypeptide reads, in one-letter code: Glucose import ATP-binding protein TsgD13 (550 aa).

ABC transporter domains lie at 7–270 and 287–533; these read LRME…VGRE and LRAR…TGGG. ATP is bound at residue 39–46; it reads GENGAGKS. Residues 529-550 form a disordered region; it reads MTGGGDATATAGAQVRGLGGSS.

It belongs to the ABC transporter superfamily. In terms of assembly, the complex is composed of two ATP-binding proteins (TsgD13), two transmembrane proteins (TsgB13 and TsgC13) and a solute-binding protein (TsgA13).

The protein resides in the cell membrane. It carries out the reaction D-glucose(out) + ATP + H2O = D-glucose(in) + ADP + phosphate + H(+). Functionally, part of an ABC transporter complex involved in glucose import. Responsible for energy coupling to the transport system. This chain is Glucose import ATP-binding protein TsgD13 (tsgD13), found in Haloferax volcanii (strain ATCC 29605 / DSM 3757 / JCM 8879 / NBRC 14742 / NCIMB 2012 / VKM B-1768 / DS2) (Halobacterium volcanii).